Here is a 98-residue protein sequence, read N- to C-terminus: Large ribosomal subunit protein bL25 (98 aa).

The interval 1–23 (MANFVLNAQARAEDKQGKGASRR) is disordered.

Belongs to the bacterial ribosomal protein bL25 family. As to quaternary structure, part of the 50S ribosomal subunit; part of the 5S rRNA/L5/L18/L25 subcomplex. Contacts the 5S rRNA. Binds to the 5S rRNA independently of L5 and L18.

Its function is as follows. This is one of the proteins that binds to the 5S RNA in the ribosome where it forms part of the central protuberance. This is Large ribosomal subunit protein bL25 from Acinetobacter baumannii (strain AB307-0294).